The chain runs to 267 residues: Sorbitol-6-phosphate 2-dehydrogenase (267 aa).

NAD(+) is bound at residue 9–38 (DNVIIVTGGASGIGLAIVDELLSQGAHVQM). Residue S147 coordinates substrate. Y160 functions as the Proton acceptor in the catalytic mechanism.

This sequence belongs to the short-chain dehydrogenases/reductases (SDR) family. In terms of assembly, homotetramer.

The catalysed reaction is D-sorbitol 6-phosphate + NAD(+) = beta-D-fructose 6-phosphate + NADH + H(+). The protein operates within carbohydrate metabolism; D-sorbitol degradation; D-fructose 6-phosphate from D-sorbitol 6-phosphate: step 1/1. The protein is Sorbitol-6-phosphate 2-dehydrogenase (sorD) of Klebsiella pneumoniae.